The chain runs to 164 residues: Thiol peroxidase (164 aa).

The 146-residue stretch at 18-163 (VSEGQHAPDF…FDAALEAYRN (146 aa)) folds into the Thioredoxin domain. Residue Cys-60 is the Cysteine sulfenic acid (-SOH) intermediate of the active site. A disulfide bond links Cys-60 and Cys-93.

The protein belongs to the peroxiredoxin family. Tpx subfamily. As to quaternary structure, homodimer.

It catalyses the reaction a hydroperoxide + [thioredoxin]-dithiol = an alcohol + [thioredoxin]-disulfide + H2O. Thiol-specific peroxidase that catalyzes the reduction of hydrogen peroxide and organic hydroperoxides to water and alcohols, respectively. Plays a role in cell protection against oxidative stress by detoxifying peroxides. The chain is Thiol peroxidase from Staphylococcus haemolyticus (strain JCSC1435).